The sequence spans 274 residues: Bis(5'-nucleosyl)-tetraphosphatase, symmetrical (274 aa).

This sequence belongs to the Ap4A hydrolase family.

The catalysed reaction is P(1),P(4)-bis(5'-adenosyl) tetraphosphate + H2O = 2 ADP + 2 H(+). Its function is as follows. Hydrolyzes diadenosine 5',5'''-P1,P4-tetraphosphate to yield ADP. The polypeptide is Bis(5'-nucleosyl)-tetraphosphatase, symmetrical (Shewanella baltica (strain OS195)).